A 237-amino-acid chain; its full sequence is Phosphatidylserine decarboxylase proenzyme (237 aa).

The active-site Schiff-base intermediate with substrate; via pyruvic acid is the Ser-206. A Pyruvic acid (Ser); by autocatalysis modification is found at Ser-206.

The protein belongs to the phosphatidylserine decarboxylase family. PSD-A subfamily. In terms of assembly, heterodimer of a large membrane-associated beta subunit and a small pyruvoyl-containing alpha subunit. Pyruvate serves as cofactor. In terms of processing, is synthesized initially as an inactive proenzyme. Formation of the active enzyme involves a self-maturation process in which the active site pyruvoyl group is generated from an internal serine residue via an autocatalytic post-translational modification. Two non-identical subunits are generated from the proenzyme in this reaction, and the pyruvate is formed at the N-terminus of the alpha chain, which is derived from the carboxyl end of the proenzyme. The post-translation cleavage follows an unusual pathway, termed non-hydrolytic serinolysis, in which the side chain hydroxyl group of the serine supplies its oxygen atom to form the C-terminus of the beta chain, while the remainder of the serine residue undergoes an oxidative deamination to produce ammonia and the pyruvoyl prosthetic group on the alpha chain.

It is found in the cell membrane. The enzyme catalyses a 1,2-diacyl-sn-glycero-3-phospho-L-serine + H(+) = a 1,2-diacyl-sn-glycero-3-phosphoethanolamine + CO2. The protein operates within phospholipid metabolism; phosphatidylethanolamine biosynthesis; phosphatidylethanolamine from CDP-diacylglycerol: step 2/2. Catalyzes the formation of phosphatidylethanolamine (PtdEtn) from phosphatidylserine (PtdSer). This is Phosphatidylserine decarboxylase proenzyme from Rhodococcus jostii (strain RHA1).